Reading from the N-terminus, the 514-residue chain is Peptide chain release factor 3 (514 aa).

The 261-residue stretch at 8 to 268 (KKRRTFAIIS…TFLKFAPEPH (261 aa)) folds into the tr-type G domain. GTP contacts are provided by residues 17-24 (SHPDAGKT), 85-89 (DTPGH), and 139-142 (NKLD).

This sequence belongs to the TRAFAC class translation factor GTPase superfamily. Classic translation factor GTPase family. PrfC subfamily.

The protein resides in the cytoplasm. Functionally, increases the formation of ribosomal termination complexes and stimulates activities of RF-1 and RF-2. It binds guanine nucleotides and has strong preference for UGA stop codons. It may interact directly with the ribosome. The stimulation of RF-1 and RF-2 is significantly reduced by GTP and GDP, but not by GMP. This Streptococcus pneumoniae serotype 19F (strain G54) protein is Peptide chain release factor 3.